Reading from the N-terminus, the 444-residue chain is Vacuolar protein sorting-associated protein 4B (444 aa).

Positions 4-82 (TNTNLQKAID…KEYLKKKEKK (79 aa)) constitute an MIT domain. A coiled-coil region spans residues 19-82 (AQEDKAGNYE…KEYLKKKEKK (64 aa)). A disordered region spans residues 77–118 (KKKEKKPQKPVKEEQSGPVDEKGNDSDGEAESDDPEKKKLQN). Residues 86–101 (PVKEEQSGPVDEKGND) show a composition bias toward basic and acidic residues. Phosphoserine occurs at positions 102 and 108. 174–181 (GPPGTGKS) is a binding site for ATP. Residue Ser-410 is modified to Phosphoserine.

It belongs to the AAA ATPase family. In terms of assembly, proposed to be monomeric or homodimeric in nucleotide-free form and to oligomerize upon binding to ATP to form two stacked hexameric or heptameric rings with a central pore through which ESCRT-III substrates are translocated in an ATP-dependent manner. In vitro, associates on the inside of a helical tubular structure formed by a CHMP2A-CHMP3 polymer. Interacts with CHMP1A, CHMP1B, CHMP4B and CHMP6. Interacts with CHMP2A. Interacts with VPS4A; the interaction suggests a heteromeric assembly with VPS4A. Interacts with VTA1. In terms of tissue distribution, high level expression seen in the kidney. It is also expressed in the heart, brain, spleen, lung, liver, skeletal muscle, and testis.

The protein localises to the late endosome membrane. The enzyme catalyses ATP + H2O = ADP + phosphate + H(+). Involved in late steps of the endosomal multivesicular bodies (MVB) pathway. Recognizes membrane-associated ESCRT-III assemblies and catalyzes their disassembly, possibly in combination with membrane fission. Redistributes the ESCRT-III components to the cytoplasm for further rounds of MVB sorting. MVBs contain intraluminal vesicles (ILVs) that are generated by invagination and scission from the limiting membrane of the endosome and mostly are delivered to lysosomes enabling degradation of membrane proteins, such as stimulated growth factor receptors, lysosomal enzymes and lipids. VPS4A/B are required for the exosomal release of SDCBP, CD63 and syndecan. Its function is as follows. (Microbial infection) In conjunction with the ESCRT machinery also appears to function in topologically equivalent membrane fission events, such as the terminal stages of cytokinesis and enveloped virus budding (lentiviruses). The chain is Vacuolar protein sorting-associated protein 4B from Mus musculus (Mouse).